We begin with the raw amino-acid sequence, 915 residues long: Protein translocase subunit SecA (915 aa).

Residues glutamine 87, glycine 105–threonine 109, and aspartate 516 each bind ATP. The tract at residues methionine 866–serine 915 is disordered. The Zn(2+) site is built by cysteine 899, cysteine 901, cysteine 910, and histidine 911. Over residues lysine 905–serine 915 the composition is skewed to basic residues.

It belongs to the SecA family. In terms of assembly, monomer and homodimer. Part of the essential Sec protein translocation apparatus which comprises SecA, SecYEG and auxiliary proteins SecDF-YajC and YidC. Zn(2+) serves as cofactor.

It is found in the cell inner membrane. It localises to the cytoplasm. It carries out the reaction ATP + H2O + cellular proteinSide 1 = ADP + phosphate + cellular proteinSide 2.. Part of the Sec protein translocase complex. Interacts with the SecYEG preprotein conducting channel. Has a central role in coupling the hydrolysis of ATP to the transfer of proteins into and across the cell membrane, serving both as a receptor for the preprotein-SecB complex and as an ATP-driven molecular motor driving the stepwise translocation of polypeptide chains across the membrane. In Delftia acidovorans (strain DSM 14801 / SPH-1), this protein is Protein translocase subunit SecA.